A 1487-amino-acid polypeptide reads, in one-letter code: Collagen alpha-1(II) chain (1487 aa).

Positions 1–25 (MIRLGAPQSLVLLTLLIAAVLRCQG) are cleaved as a signal peptide. Residues 26–181 (QDAQEAGSCL…PGLSAGNFAA (156 aa)) constitute a propeptide, N-terminal propeptide. The 58-residue stretch at 32–89 (GSCLQNGQRYKDKDVWKPSSCRICVCDTGNVLCDDIICEDPDCLNPEIPFGECCPICP) folds into the VWFC domain. Positions 96-179 (SGKLGPKGQK…GPPGLSAGNF (84 aa)) are disordered. 2 stretches are compositionally biased toward basic and acidic residues: residues 104-115 (QKGEPGDIRDII) and 132-153 (PRGD…RDGE). Residues 157 to 172 (PGNPGPAGPPGPPGPP) show a composition bias toward pro residues. At Lys190 the chain carries 5-hydroxylysine. An O-linked (Gal...) hydroxylysine glycan is attached at Lys190. Residues 191–1237 (AGGAQMGVMQ…QREKGPDPMQ (1047 aa)) are disordered. Positions 192-203 (GGAQMGVMQGPM) are enriched in low complexity. Positions 201–1214 (GPMGPMGPRG…PGPPGPPGPP (1014 aa)) are triple-helical region. The segment covering 208-217 (PRGPPGPAGA) has biased composition (pro residues). Positions 218 to 239 (PGPQGFQGNPGEPGEPGVSGPM) are enriched in low complexity. Residues 251 to 265 (PGDDGEAGKPGKSGE) are compositionally biased toward basic and acidic residues. Lys287, Lys299, and Lys308 each carry 5-hydroxylysine. 3 O-linked (Gal...) hydroxylysine glycosylation sites follow: Lys287, Lys299, and Lys308. Low complexity-rich tracts occupy residues 310–320 (ESGSPGENGSP) and 335–350 (TGPA…DGQP). The segment covering 360–369 (GPAGGPGFPG) has biased composition (gly residues). Low complexity-rich tracts occupy residues 370–382 (APGA…PTGA) and 403–431 (PAGA…AGAP). At Lys374 the chain carries 5-hydroxylysine. Lys374 is a glycosylation site (O-linked (Gal...) hydroxylysine). Residues 433-442 (FPGPRGPPGP) are compositionally biased toward pro residues. A compositionally biased stretch (low complexity) spans 472–485 (ETGPAGPQGAPGPA). Residues Lys608 and Lys620 each carry the 5-hydroxylysine modification. Residues Lys608 and Lys620 are each glycosylated (O-linked (Gal...) hydroxylysine). The segment covering 622 to 631 (LAGAPGLRGL) has biased composition (low complexity). 4-hydroxyproline is present on residues Pro659 and Pro668. At Pro670 the chain carries 3-hydroxyproline. 2 positions are modified to 4-hydroxyproline: Pro671 and Pro674. A compositionally biased stretch (low complexity) spans 706–736 (ERGSPGAQGLQGPRGLPGTPGTDGPKGAAGP). Residues 764–775 (KGDRGDVGEKGP) are compositionally biased toward basic and acidic residues. Composition is skewed to low complexity over residues 833 to 848 (AGFA…PGAK) and 877 to 914 (PTGV…NGNP). Pro907 carries the post-translational modification 3-hydroxyproline. A 4-hydroxyproline mark is found at Pro908, Pro914, and Pro920. A compositionally biased stretch (low complexity) spans 962–980 (DGPSGLDGPPGPQGLAGQR). The span at 1069–1079 (APGPPGSPGPA) shows a compositional bias: pro residues. Basic and acidic residues predominate over residues 1115–1129 (RGDKGESGEQGERGL). Position 1144 is a 3-hydroxyproline (Pro1144). Composition is skewed to low complexity over residues 1148 to 1157 (SGDQGASGPA) and 1171 to 1181 (PSGKDGSNGIP). Pro1181 is modified (4-hydroxyproline). A 3-hydroxyproline modification is found at Pro1186. Pro1187 bears the 4-hydroxyproline mark. Residues 1199–1216 (VGPPGSPGPPGPPGPPGP) show a composition bias toward pro residues. Position 1201 is a 3-hydroxyproline (Pro1201). 4-hydroxyproline occurs at positions 1202 and 1205. Pro1207 carries the 3-hydroxyproline modification. 4-hydroxyproline occurs at positions 1208 and 1211. Pro1213 carries the 3-hydroxyproline modification. Pro1214 is modified (4-hydroxyproline). Residues 1215–1241 (GPGIDMSAFAGLGQREKGPDPMQYMRA) are nonhelical region (C-terminal). The 235-residue stretch at 1253 to 1487 (VEVDATLKSL…GVDIGPVCFL (235 aa)) folds into the Fibrillar collagen NC1 domain. Cystine bridges form between Cys1283-Cys1315, Cys1323-Cys1485, and Cys1393-Cys1438. Ca(2+) is bound by residues Asp1301, Asn1303, Gln1304, Cys1306, and Asp1309.

It belongs to the fibrillar collagen family. In terms of assembly, homotrimers of alpha 1(II) chains. Post-translationally, contains mostly 4-hydroxyproline. Prolines at the third position of the tripeptide repeating unit (G-X-P) are 4-hydroxylated in some or all of the chains. Contains 3-hydroxyproline at a few sites. This modification occurs on the first proline residue in the sequence motif Gly-Pro-Hyp, where Hyp is 4-hydroxyproline. In terms of processing, lysine residues at the third position of the tripeptide repeating unit (G-X-Y) are 5-hydroxylated in some or all of the chains. Post-translationally, O-glycosylated on hydroxylated lysine residues. The O-linked glycan consists of a Glc-Gal disaccharide.

The protein localises to the secreted. Its subcellular location is the extracellular space. It is found in the extracellular matrix. In terms of biological role, type II collagen is specific for cartilaginous tissues. It is essential for the normal embryonic development of the skeleton, for linear growth and for the ability of cartilage to resist compressive forces. This is Collagen alpha-1(II) chain from Mus musculus (Mouse).